The chain runs to 520 residues: Ribonuclease Y (520 aa).

The helical transmembrane segment at 4 to 24 (TVWILISILLATVGAVVGFFV) threads the bilayer. The 64-residue stretch at 210–273 (TVSVVNLPND…ETARIALDKL (64 aa)) folds into the KH domain. In terms of domain architecture, HD spans 336-429 (VLKHSMEVAY…VAAADALSAA (94 aa)).

The protein belongs to the RNase Y family.

The protein localises to the cell membrane. Its function is as follows. Endoribonuclease that initiates mRNA decay. The polypeptide is Ribonuclease Y (Bacillus cereus (strain ZK / E33L)).